A 73-amino-acid polypeptide reads, in one-letter code: DNA gyrase inhibitor YacG (73 aa).

Zn(2+) is bound by residues C12, C15, C31, and C35. The disordered stretch occupies residues 47–73 (DYAIPGEPIDPAEPSEDRNGAEGPPTD).

This sequence belongs to the DNA gyrase inhibitor YacG family. As to quaternary structure, interacts with GyrB. Zn(2+) is required as a cofactor.

In terms of biological role, inhibits all the catalytic activities of DNA gyrase by preventing its interaction with DNA. Acts by binding directly to the C-terminal domain of GyrB, which probably disrupts DNA binding by the gyrase. This Methylococcus capsulatus (strain ATCC 33009 / NCIMB 11132 / Bath) protein is DNA gyrase inhibitor YacG.